A 360-amino-acid chain; its full sequence is GTPase Obg (360 aa).

The Obg domain maps to 1-156 (MFVDSVEIII…KCVRLELKLI (156 aa)). Residues 157–360 (ADIGLVGFPN…LKFVLLKALP (204 aa)) form the OBG-type G domain. GTP-binding positions include 163-170 (GFPNAGKS), 188-192 (FTTLV), 210-213 (DIPG), 279-282 (NKCD), and 341-343 (SAV). The Mg(2+) site is built by Ser170 and Thr190.

This sequence belongs to the TRAFAC class OBG-HflX-like GTPase superfamily. OBG GTPase family. Monomer. The cofactor is Mg(2+).

The protein localises to the cytoplasm. Its function is as follows. An essential GTPase which binds GTP, GDP and possibly (p)ppGpp with moderate affinity, with high nucleotide exchange rates and a fairly low GTP hydrolysis rate. Plays a role in control of the cell cycle, stress response, ribosome biogenesis and in those bacteria that undergo differentiation, in morphogenesis control. This Helicobacter pylori (strain G27) protein is GTPase Obg.